Consider the following 85-residue polypeptide: Large ribosomal subunit protein uL23 (85 aa).

It belongs to the universal ribosomal protein uL23 family. As to quaternary structure, part of the 50S ribosomal subunit. Interacts with protein L29 and weakly with protein L39e.

Binds to a specific region on the 23S rRNA. Located at the polypeptide exit tunnel on the outside of the subunit. The protein is Large ribosomal subunit protein uL23 of Haloarcula marismortui (strain ATCC 43049 / DSM 3752 / JCM 8966 / VKM B-1809) (Halobacterium marismortui).